The primary structure comprises 491 residues: UDP-N-acetylmuramate--L-alanine ligase (491 aa).

126–132 serves as a coordination point for ATP; the sequence is GTHGKTT.

It belongs to the MurCDEF family.

It localises to the cytoplasm. The catalysed reaction is UDP-N-acetyl-alpha-D-muramate + L-alanine + ATP = UDP-N-acetyl-alpha-D-muramoyl-L-alanine + ADP + phosphate + H(+). It participates in cell wall biogenesis; peptidoglycan biosynthesis. Cell wall formation. This Klebsiella pneumoniae (strain 342) protein is UDP-N-acetylmuramate--L-alanine ligase.